The following is a 459-amino-acid chain: Putrescine aminotransferase (459 aa).

Residues 150–151 (GT) and Gln274 contribute to the pyridoxal 5'-phosphate site. N6-(pyridoxal phosphate)lysine is present on Lys300. Thr332 contacts pyridoxal 5'-phosphate.

The protein belongs to the class-III pyridoxal-phosphate-dependent aminotransferase family. Putrescine aminotransferase subfamily. The cofactor is pyridoxal 5'-phosphate.

The enzyme catalyses an alkane-alpha,omega-diamine + 2-oxoglutarate = an omega-aminoaldehyde + L-glutamate. It catalyses the reaction putrescine + 2-oxoglutarate = 1-pyrroline + L-glutamate + H2O. It carries out the reaction cadaverine + 2-oxoglutarate = 5-aminopentanal + L-glutamate. Its pathway is amine and polyamine degradation; putrescine degradation; 4-aminobutanal from putrescine (transaminase route): step 1/1. Functionally, catalyzes the aminotransferase reaction from putrescine to 2-oxoglutarate, leading to glutamate and 4-aminobutanal, which spontaneously cyclizes to form 1-pyrroline. This is the first step in one of two pathways for putrescine degradation, where putrescine is converted into 4-aminobutanoate (gamma-aminobutyrate or GABA) via 4-aminobutanal. Also functions as a cadaverine transaminase in a a L-lysine degradation pathway to succinate that proceeds via cadaverine, glutarate and L-2-hydroxyglutarate. The protein is Putrescine aminotransferase of Salmonella paratyphi A (strain ATCC 9150 / SARB42).